The sequence spans 95 residues: Glutamine synthetase and cystathionine beta-lyase binding protein (95 aa).

Interacts with glutamine synthetase (TTHA1329) and cystathionine beta-lyase (TTHA1620), but proteins do not form a ternary complex.

Its function is as follows. Binds to glutamine synthetase and cystathionine beta-lyase. May be utilized for the efficient use of nitrogen in the global nitrogen regulation of T.thermophilus. In Thermus thermophilus (strain ATCC 27634 / DSM 579 / HB8), this protein is Glutamine synthetase and cystathionine beta-lyase binding protein.